The following is a 411-amino-acid chain: LL-diaminopimelate aminotransferase (411 aa).

Residues tyrosine 15 and glycine 42 each coordinate substrate. Pyridoxal 5'-phosphate-binding positions include tyrosine 72, 108-109 (AK), tyrosine 132, asparagine 188, tyrosine 219, and 247-249 (SFS). Residues lysine 109, tyrosine 132, and asparagine 188 each coordinate substrate. Residue lysine 250 is modified to N6-(pyridoxal phosphate)lysine. 2 residues coordinate pyridoxal 5'-phosphate: arginine 258 and asparagine 293. Substrate is bound by residues asparagine 293 and arginine 389.

The protein belongs to the class-I pyridoxal-phosphate-dependent aminotransferase family. LL-diaminopimelate aminotransferase subfamily. As to quaternary structure, homodimer. Pyridoxal 5'-phosphate serves as cofactor.

It carries out the reaction (2S,6S)-2,6-diaminopimelate + 2-oxoglutarate = (S)-2,3,4,5-tetrahydrodipicolinate + L-glutamate + H2O + H(+). Its pathway is amino-acid biosynthesis; L-lysine biosynthesis via DAP pathway; LL-2,6-diaminopimelate from (S)-tetrahydrodipicolinate (aminotransferase route): step 1/1. In terms of biological role, involved in the synthesis of meso-diaminopimelate (m-DAP or DL-DAP), required for both lysine and peptidoglycan biosynthesis. Catalyzes the direct conversion of tetrahydrodipicolinate to LL-diaminopimelate. Is also able to catalyze the reverse reaction in vitro, i.e. the transamination of LL-diaminopimelate with 2-oxoglutarate to produce tetrahydrodipicolinate and glutamate. Can also use m-DAP instead of LL-DAP as the amino-group donor, and oxaloacetate or pyruvate as the amino-group acceptor. The sequence is that of LL-diaminopimelate aminotransferase from Desulfitobacterium hafniense (strain DSM 10664 / DCB-2).